The sequence spans 345 residues: Selenide, water dikinase (345 aa).

C16 is an active-site residue. ATP is bound by residues K19 and T46–D48. Mg(2+) is bound at residue D49. ATP-binding positions include D66, D89, and G136–T138. D89 is a Mg(2+) binding site. D224 is a binding site for Mg(2+).

The protein belongs to the selenophosphate synthase 1 family. Class I subfamily. As to quaternary structure, homodimer. Mg(2+) is required as a cofactor.

The enzyme catalyses hydrogenselenide + ATP + H2O = selenophosphate + AMP + phosphate + 2 H(+). Functionally, synthesizes selenophosphate from selenide and ATP. The sequence is that of Selenide, water dikinase from Clostridium botulinum (strain Alaska E43 / Type E3).